The following is a 476-amino-acid chain: Cardiolipin synthase (476 aa).

The next 2 helical transmembrane spans lie at 2–22 (HLFI…IIFI) and 31–51 (WAWI…YILF). 2 consecutive PLD phosphodiesterase domains span residues 207–234 (INYR…GDEY) and 389–416 (EKGF…DIRS). Active-site residues include His212, Lys214, Asp219, His394, Lys396, and Asp401.

The protein belongs to the phospholipase D family. Cardiolipin synthase subfamily.

It localises to the cell membrane. It carries out the reaction 2 a 1,2-diacyl-sn-glycero-3-phospho-(1'-sn-glycerol) = a cardiolipin + glycerol. Catalyzes the reversible phosphatidyl group transfer from one phosphatidylglycerol molecule to another to form cardiolipin (CL) (diphosphatidylglycerol) and glycerol. This is Cardiolipin synthase (cls) from Clostridium perfringens (strain 13 / Type A).